Here is a 193-residue protein sequence, read N- to C-terminus: Peptide deformylase 2 (193 aa).

Residues Cys100 and His142 each coordinate Fe cation. Residue Glu143 is part of the active site. Residue His146 participates in Fe cation binding.

Belongs to the polypeptide deformylase family. Fe(2+) is required as a cofactor.

The catalysed reaction is N-terminal N-formyl-L-methionyl-[peptide] + H2O = N-terminal L-methionyl-[peptide] + formate. Removes the formyl group from the N-terminal Met of newly synthesized proteins. Requires at least a dipeptide for an efficient rate of reaction. N-terminal L-methionine is a prerequisite for activity but the enzyme has broad specificity at other positions. This Corynebacterium efficiens (strain DSM 44549 / YS-314 / AJ 12310 / JCM 11189 / NBRC 100395) protein is Peptide deformylase 2.